Here is a 102-residue protein sequence, read N- to C-terminus: Protein translation factor SUI1 homolog (102 aa).

The protein belongs to the SUI1 family.

This chain is Protein translation factor SUI1 homolog, found in Methanococcus vannielii.